The primary structure comprises 4743 residues: Apolipoprotein B-100 (4743 aa).

The first 27 residues, 1 to 27, serve as a signal peptide directing secretion; it reads MGPQRPALRAPLLLLFLLLFLDTSVWA. The interval 29-113 is heparin-binding; sequence DATRFKHLRK…KNSEEFASAM (85 aa). Residues 33-660 form the Vitellogenin domain; the sequence is FKHLRKYVYS…PSSYLPKESM (628 aa). Cys-65 and Cys-84 are oxidised to a cystine. Asn-172 carries N-linked (GlcNAc...) asparagine glycosylation. 4 cysteine pairs are disulfide-bonded: Cys-173–Cys-199, Cys-232–Cys-248, Cys-372–Cys-377, and Cys-466–Cys-501. The interval 219 to 293 is heparin-binding; it reads VRPLSTLISS…RFFRGGINQV (75 aa). The interval 890–947 is heparin-binding; sequence NTNFFHESGLEARVALKAGQLKVIIPSPKRPVKLFSGSNTLHLVSTTKTEVIPPLIEN. Cys-954 and Cys-964 form a disulfide bridge. N-linked (GlcNAc...) asparagine glycans are attached at residues Asn-971, Asn-1336, Asn-1345, and Asn-1491. Position 1973 is an N6-acetyllysine (Lys-1973). Ser-2006 bears the Phosphoserine mark. The heparin-binding stretch occupies residues 2010 to 2145; it reads NDAFDEPREF…EKLSQLETYA (136 aa). N-linked (GlcNAc...) asparagine glycans are attached at residues Asn-2094, Asn-2522, Asn-2662, Asn-2741, Asn-2791, Asn-2897, Asn-2944, and Asn-3063. The segment at 3123–3198 is heparin-binding; sequence FLKTTKQSFD…KIKFDKYKTE (76 aa). The tract at residues 3136–3146 is basic (possible receptor binding region); that stretch reads KAQYKKNRDKH. N-linked (GlcNAc...) asparagine glycosylation is found at Asn-3186, Asn-3299, and Asn-3321. The interval 3336-3356 is LDL receptor binding; it reads VTDALQYKLEGTSRLMRKKVL. The heparin-binding stretch occupies residues 3346–3479; sequence GTSRLMRKKV…QEYSGSVANE (134 aa). Residues 3349–3357 are basic (possible receptor binding region); sequence RLMRKKVLK. 3 N-linked (GlcNAc...) asparagine glycosylation sites follow: Asn-3428, Asn-3715, and Asn-3828. Ser-3981 is subject to Phosphoserine. Thr-3985 is modified (phosphothreonine). 2 N-linked (GlcNAc...) asparagine glycosylation sites follow: Asn-4203 and Asn-4232.

Interacts with PCSK9. Interacts with MTTP. Interacts with AUP1. Interacts with CIDEB. Post-translationally, palmitoylated; structural requirement for proper assembly of the hydrophobic core of the lipoprotein particle. As to expression, detected in intestine and liver (at protein level).

It localises to the cytoplasm. The protein resides in the secreted. The protein localises to the lipid droplet. In terms of biological role, apolipoprotein B is a major protein constituent of chylomicrons (apo B-48), LDL (apo B-100) and VLDL (apo B-100). Apo B-100 functions as a recognition signal for the cellular binding and internalization of LDL particles by the apoB/E receptor. This is Apolipoprotein B-100 (Apob) from Rattus norvegicus (Rat).